We begin with the raw amino-acid sequence, 787 residues long: DNA ligase (787 aa).

NAD(+) contacts are provided by residues Asp-32–Asp-36, Ser-81–Leu-82, and Glu-121. Residue Lys-123 is the N6-AMP-lysine intermediate of the active site. Residues Arg-144, Glu-181, Lys-297, and Lys-321 each coordinate NAD(+). Cys-415, Cys-418, Cys-445, and Cys-451 together coordinate Zn(2+). Residues Val-703–Asp-787 enclose the BRCT domain.

Belongs to the NAD-dependent DNA ligase family. LigA subfamily. Mg(2+) is required as a cofactor. Requires Mn(2+) as cofactor.

The catalysed reaction is NAD(+) + (deoxyribonucleotide)n-3'-hydroxyl + 5'-phospho-(deoxyribonucleotide)m = (deoxyribonucleotide)n+m + AMP + beta-nicotinamide D-nucleotide.. Its function is as follows. DNA ligase that catalyzes the formation of phosphodiester linkages between 5'-phosphoryl and 3'-hydroxyl groups in double-stranded DNA using NAD as a coenzyme and as the energy source for the reaction. It is essential for DNA replication and repair of damaged DNA. The protein is DNA ligase of Pseudomonas syringae pv. syringae (strain B728a).